The sequence spans 168 residues: uncharacterized protein (168 aa).

One can recognise a PfpI endopeptidase domain in the interval 1–166; that stretch reads MRVLILAENE…FCGELIKILK (166 aa).

It belongs to the peptidase C56 family.

This is an uncharacterized protein from Archaeoglobus fulgidus (strain ATCC 49558 / DSM 4304 / JCM 9628 / NBRC 100126 / VC-16).